The following is a 488-amino-acid chain: Long chain base biosynthesis protein 2a (488 aa).

A helical transmembrane segment spans residues 4 to 24 (LPYTTALTTLFSYGLLFAFGQ). Position 311 is an N6-(pyridoxal phosphate)lysine (lysine 311).

The protein belongs to the class-II pyridoxal-phosphate-dependent aminotransferase family. As to quaternary structure, heterodimer with LCB1. Component of the serine palmitoyltransferase (SPT) complex, composed of LCB1 and LCB2. Pyridoxal 5'-phosphate serves as cofactor.

It is found in the endoplasmic reticulum membrane. The catalysed reaction is L-serine + hexadecanoyl-CoA + H(+) = 3-oxosphinganine + CO2 + CoA. It participates in lipid metabolism; sphingolipid metabolism. Serine palmitoyltransferase (SPT). The heterodimer formed with LCB1 constitutes the catalytic core. In Oryza sativa subsp. japonica (Rice), this protein is Long chain base biosynthesis protein 2a.